The primary structure comprises 731 residues: Cell death abnormality protein 12 (731 aa).

Residues 339–485 form the ELMO domain; that stretch reads AEVQKILDIE…VVLEQLRHVL (147 aa). The PH domain occupies 544-679; the sequence is VRINHLNYLK…WLEGLAELIG (136 aa). The SH3-binding signature appears at 715 to 718; that stretch reads PEIP.

Interacts with psr-1. Forms a ternary complex with ced-2 and ced-5.

Its subcellular location is the cytoplasm. In terms of biological role, involved in programmed apoptosis and necrosis. Required for the cell corpse engulfment process. Has roles in the formation of actin halos and distal tip cell migration. Negatively regulates the unc-6/Netrin receptor unc-5 to control distal tip cell migration along the anterior-posterior axis of the body. Plays no role in amphid axon outgrowth. The sequence is that of Cell death abnormality protein 12 from Caenorhabditis elegans.